A 299-amino-acid polypeptide reads, in one-letter code: Pyridoxal 5'-phosphate synthase subunit PdxS (299 aa).

Asp29 is a binding site for D-ribose 5-phosphate. The active-site Schiff-base intermediate with D-ribose 5-phosphate is the Lys86. Position 158 (Gly158) interacts with D-ribose 5-phosphate. Arg170 contacts D-glyceraldehyde 3-phosphate. D-ribose 5-phosphate contacts are provided by residues Gly219 and 240 to 241 (GS).

The protein belongs to the PdxS/SNZ family. In terms of assembly, in the presence of PdxT, forms a dodecamer of heterodimers.

The catalysed reaction is aldehydo-D-ribose 5-phosphate + D-glyceraldehyde 3-phosphate + L-glutamine = pyridoxal 5'-phosphate + L-glutamate + phosphate + 3 H2O + H(+). Its pathway is cofactor biosynthesis; pyridoxal 5'-phosphate biosynthesis. In terms of biological role, catalyzes the formation of pyridoxal 5'-phosphate from ribose 5-phosphate (RBP), glyceraldehyde 3-phosphate (G3P) and ammonia. The ammonia is provided by the PdxT subunit. Can also use ribulose 5-phosphate and dihydroxyacetone phosphate as substrates, resulting from enzyme-catalyzed isomerization of RBP and G3P, respectively. The protein is Pyridoxal 5'-phosphate synthase subunit PdxS of Protochlamydia amoebophila (strain UWE25).